A 629-amino-acid polypeptide reads, in one-letter code: 5-aminolevulinate synthase, mitochondrial (629 aa).

Residues 1–69 (MDSVLRQSKA…VQSARTGGRA (69 aa)) constitute a mitochondrion transit peptide. Positions 155, 268, and 287 each coordinate substrate. Positions 320, 348, and 388 each coordinate pyridoxal 5'-phosphate. The active site involves Lys391. The residue at position 391 (Lys391) is an N6-(pyridoxal phosphate)lysine. Pyridoxal 5'-phosphate contacts are provided by Thr420 and Thr421. Thr506 provides a ligand contact to substrate.

The protein belongs to the class-II pyridoxal-phosphate-dependent aminotransferase family. In terms of assembly, homodimer. The cofactor is pyridoxal 5'-phosphate.

Its subcellular location is the mitochondrion matrix. The enzyme catalyses succinyl-CoA + glycine + H(+) = 5-aminolevulinate + CO2 + CoA. It functions in the pathway porphyrin-containing compound metabolism; protoporphyrin-IX biosynthesis; 5-aminolevulinate from glycine: step 1/1. Functionally, catalyzes the synthesis of 5-aminolevulinate (ALA) from succinyl-CoA and glycine, the first and rate-limiting step in heme biosynthesis. The chain is 5-aminolevulinate synthase, mitochondrial (alv-1) from Neurospora crassa (strain ATCC 24698 / 74-OR23-1A / CBS 708.71 / DSM 1257 / FGSC 987).